A 730-amino-acid chain; its full sequence is Zinc finger protein 615 (730 aa).

In terms of domain architecture, KRAB spans 7-78; it reads LTLEDVAVDF…EDEIYSRICF (72 aa). 19 consecutive C2H2-type zinc fingers follow at residues 203-225, 231-253, 259-281, 287-309, 315-337, 343-365, 371-393, 399-421, 427-449, 455-477, 483-505, 511-533, 539-561, 567-589, 595-617, 623-645, 651-673, 679-701, and 707-729; these read HVCS…QRVH, HVCS…QRTH, YECT…QKTH, YTCS…QRTH, HGCS…QKTH, YICS…HRTH, FICN…QQTH, YKCN…QRTH, YVCT…QRTH, YICN…QRTH, YVCG…QRTH, YICD…RRTH, YVCS…QRTH, YICN…QQTH, YKCN…QRFH, FACT…QRIH, YKCS…QRKH, and YGCS…KRIH.

It belongs to the krueppel C2H2-type zinc-finger protein family.

It localises to the nucleus. Functionally, may be involved in transcriptional regulation. The protein is Zinc finger protein 615 (ZNF615) of Pongo abelii (Sumatran orangutan).